The primary structure comprises 490 residues: POC1 centriolar protein homolog B (490 aa).

WD repeat units follow at residues 16–55 (GHKDVISCADFNPNNKQLATGSCDKSLMIWNLAPKARAFR), 58–97 (GHTDVITGVNFAPSGSLVASSSRDQTVRLWTPSIKGESTV), 100–139 (AHTASVRSVHFSRDGQRLVTASDDKSVKVWGVERKKFLYS), 142–181 (RHTNWVRCARFSPDGRLIASCGDDRTVRLWDTSSHQCINI), 184–223 (DYGGSATFVDFNSSGTCIASSGADNTIKIWDIRTNKLIQH), 226–265 (VHNAGVNCFSFHPSGNYLISGSSDSTIKILDLLEGRLIYT), and 268–307 (GHKGPVLTVTFSRDGDLFASGGADSQVLMWKTNFDSLNYR). The segment covering 375-388 (DGASSSRAQFTSGM) has biased composition (polar residues). A disordered region spans residues 375–427 (DGASSSRAQFTSGMDSGPFRTHTQAREEEDENQEERFAGGMTASPAERSGIPS). The stretch at 431–463 (STLENIVQQLDILTQTVAVLEERLTLTEDKLRT) forms a coiled coil.

It belongs to the WD repeat POC1 family.

Its subcellular location is the cytoplasm. It is found in the cytoskeleton. The protein localises to the microtubule organizing center. The protein resides in the centrosome. It localises to the centriole. Functionally, plays an important role in centriole assembly and/or stability and ciliogenesis. Involved in early steps of centriole duplication, as well as in the later steps of centriole length control. The chain is POC1 centriolar protein homolog B from Danio rerio (Zebrafish).